Reading from the N-terminus, the 1003-residue chain is Pumilio homolog 4 (1003 aa).

The disordered stretch occupies residues 38–65 (QHRNQQSFGRERERDIDVHRSGSAPPTV). Residues 46–57 (GRERERDIDVHR) are compositionally biased toward basic and acidic residues. A Phosphoserine modification is found at Ser225. Polar residues predominate over residues 285–300 (KNSPNTMLGSTMSSPV). Residues 285 to 328 (KNSPNTMLGSTMSSPVPRNRTPDSHLVGRSTASGLPPIGTRVGP) are disordered. The residue at position 305 (Thr305) is a Phosphothreonine. One can recognise a PUM-HD domain in the interval 644–984 (AEASLLEGFK…HIVARVEKLI (341 aa)). Pumilio repeat units follow at residues 664–699 (EIVG…AIFP), 700–735 (EILP…ELAE), 736–771 (QVTG…RMVK), 772–807 (ELDG…FIIS), 808–843 (SFYG…RIIM), 845–880 (EIMD…EIIN), 881–916 (KLAG…VLVN), and 917–958 (EMLG…LILS).

It localises to the cytoplasm. Its function is as follows. Sequence-specific RNA-binding protein that regulates translation and mRNA stability by binding the 3'-UTR of target mRNAs. Binds the APUM-binding elements (APBEs) in the 3'-UTR mRNA sequence of CLV1, PNH, WUS and FAS2. The chain is Pumilio homolog 4 (APUM4) from Arabidopsis thaliana (Mouse-ear cress).